A 285-amino-acid chain; its full sequence is Short chain dehydrogenase sol3 (285 aa).

Leucine 39, lysine 64, and aspartate 87 together coordinate NADP(+). Catalysis depends on proton donor residues serine 168 and tyrosine 200. NADP(+) contacts are provided by tyrosine 200, lysine 204, and serine 234. Lysine 204 functions as the Lowers pKa of active site Tyr in the catalytic mechanism.

This sequence belongs to the short-chain dehydrogenases/reductases (SDR) family.

It participates in phytotoxin biosynthesis. Its function is as follows. Short chain dehydrogenase; part of the gene cluster that mediates the biosynthesis of the phytotoxin solanapyrone, a causal agent of early blight disease of potato and tomato. The prosolanapyrone synthase sol1 is a polyketide synthase that produces the octaketide desmethylprosolanapyrone I via sequential condensations of 7 malonyl-CoA units with one acetyl-CoA unit, and one methylation step. The octaketide backbone is further methylated by the sol2 O-methyltransferase to yield prosolanapyrone I. Prosolanapyrone I is hydroxylated to prosolanapyrone II by the cytochrome P450 monooxygenase sol6. The solanapyrone synthase sol5 then catalyzes the oxidation of prosolanapyrone II and the subsequent Diels Alder cycloisomerization of the product prosolanapyrone III to solanapyrones A and D. Solanapyrones A and D are then converted into solanapyrones B and E, respectively, by the sol3 dehydrogenase. In Alternaria solani, this protein is Short chain dehydrogenase sol3 (sol3).